The primary structure comprises 315 residues: Aspartate carbamoyltransferase catalytic subunit (315 aa).

Carbamoyl phosphate is bound by residues Arg-64 and Thr-65. Lys-93 contacts L-aspartate. Carbamoyl phosphate-binding residues include Arg-114, His-142, and Gln-145. Positions 175 and 237 each coordinate L-aspartate. Leu-276 and Pro-277 together coordinate carbamoyl phosphate.

It belongs to the aspartate/ornithine carbamoyltransferase superfamily. ATCase family. As to quaternary structure, heterooligomer of catalytic and regulatory chains.

The enzyme catalyses carbamoyl phosphate + L-aspartate = N-carbamoyl-L-aspartate + phosphate + H(+). Its pathway is pyrimidine metabolism; UMP biosynthesis via de novo pathway; (S)-dihydroorotate from bicarbonate: step 2/3. In terms of biological role, catalyzes the condensation of carbamoyl phosphate and aspartate to form carbamoyl aspartate and inorganic phosphate, the committed step in the de novo pyrimidine nucleotide biosynthesis pathway. This chain is Aspartate carbamoyltransferase catalytic subunit, found in Thermofilum pendens (strain DSM 2475 / Hrk 5).